We begin with the raw amino-acid sequence, 342 residues long: N-acetyl-gamma-glutamyl-phosphate reductase (342 aa).

The active site involves Cys146.

Belongs to the NAGSA dehydrogenase family. Type 1 subfamily.

It is found in the cytoplasm. The enzyme catalyses N-acetyl-L-glutamate 5-semialdehyde + phosphate + NADP(+) = N-acetyl-L-glutamyl 5-phosphate + NADPH + H(+). Its pathway is amino-acid biosynthesis; L-arginine biosynthesis; N(2)-acetyl-L-ornithine from L-glutamate: step 3/4. Catalyzes the NADPH-dependent reduction of N-acetyl-5-glutamyl phosphate to yield N-acetyl-L-glutamate 5-semialdehyde. The sequence is that of N-acetyl-gamma-glutamyl-phosphate reductase from Thermobifida fusca (strain YX).